An 874-amino-acid polypeptide reads, in one-letter code: Cyanophycin synthetase (874 aa).

An ATP-grasp domain is found at 224–480; the sequence is KTTLAEAGIP…VAAPVIDMLF (257 aa). 495–501 contributes to the ATP binding site; it reads GTNGKTT.

In the C-terminal section; belongs to the MurCDEF family. As to quaternary structure, homodimer.

The catalysed reaction is [L-4-(L-arginin-2-N-yl)aspartate](n) + L-aspartate + ATP = [L-4-(L-arginin-2-N-yl)aspartate](n)-L-aspartate + ADP + phosphate + H(+). The enzyme catalyses [L-4-(L-arginin-2-N-yl)aspartate](n)-L-aspartate + L-arginine + ATP = [L-4-(L-arginin-2-N-yl)aspartate](n+1) + ADP + phosphate + H(+). Its function is as follows. Catalyzes the ATP-dependent polymerization of arginine and aspartate to multi-L-arginyl-poly-L-aspartic acid (cyanophycin; a water-insoluble reserve polymer). This Geminocystis herdmanii (strain PCC 6308) (Synechocystis sp. (strain PCC 6308)) protein is Cyanophycin synthetase (cphA).